The chain runs to 224 residues: Uracil-DNA glycosylase (224 aa).

The active-site Proton acceptor is aspartate 62.

Belongs to the uracil-DNA glycosylase (UDG) superfamily. UNG family.

It localises to the cytoplasm. It carries out the reaction Hydrolyzes single-stranded DNA or mismatched double-stranded DNA and polynucleotides, releasing free uracil.. In terms of biological role, excises uracil residues from the DNA which can arise as a result of misincorporation of dUMP residues by DNA polymerase or due to deamination of cytosine. The sequence is that of Uracil-DNA glycosylase from Aliivibrio fischeri (strain ATCC 700601 / ES114) (Vibrio fischeri).